The primary structure comprises 285 residues: Dermonecrotic toxin LlSicTox-alphaIII2 (285 aa).

His12 is an active-site residue. Mg(2+) is bound by residues Glu32 and Asp34. His47 (nucleophile) is an active-site residue. An intrachain disulfide couples Cys51 to Cys57. Position 91 (Asp91) interacts with Mg(2+).

The protein belongs to the arthropod phospholipase D family. Class I subfamily. Requires Mg(2+) as cofactor. As to expression, expressed by the venom gland.

The protein resides in the secreted. It catalyses the reaction an N-(acyl)-sphingosylphosphocholine = an N-(acyl)-sphingosyl-1,3-cyclic phosphate + choline. The enzyme catalyses an N-(acyl)-sphingosylphosphoethanolamine = an N-(acyl)-sphingosyl-1,3-cyclic phosphate + ethanolamine. It carries out the reaction a 1-acyl-sn-glycero-3-phosphocholine = a 1-acyl-sn-glycero-2,3-cyclic phosphate + choline. The catalysed reaction is a 1-acyl-sn-glycero-3-phosphoethanolamine = a 1-acyl-sn-glycero-2,3-cyclic phosphate + ethanolamine. Its function is as follows. Dermonecrotic toxins cleave the phosphodiester linkage between the phosphate and headgroup of certain phospholipids (sphingolipid and lysolipid substrates), forming an alcohol (often choline) and a cyclic phosphate. This toxin acts on sphingomyelin (SM) (228.2 U/mg). It may also act on ceramide phosphoethanolamine (CPE), lysophosphatidylcholine (LPC) and lysophosphatidylethanolamine (LPE), but not on lysophosphatidylserine (LPS), and lysophosphatidylglycerol (LPG). It acts by transphosphatidylation, releasing exclusively cyclic phosphate products as second products. Induces dermonecrosis, hemolysis, increased vascular permeability, edema, inflammatory response, and platelet aggregation. Is lethal to mice. The protein is Dermonecrotic toxin LlSicTox-alphaIII2 of Loxosceles laeta (South American recluse spider).